A 142-amino-acid chain; its full sequence is Nucleoside diphosphate kinase (142 aa).

K11, F59, R87, T93, R104, and N114 together coordinate ATP. H117 functions as the Pros-phosphohistidine intermediate in the catalytic mechanism.

This sequence belongs to the NDK family. As to quaternary structure, homotetramer. Mg(2+) is required as a cofactor.

The protein localises to the cytoplasm. The enzyme catalyses a 2'-deoxyribonucleoside 5'-diphosphate + ATP = a 2'-deoxyribonucleoside 5'-triphosphate + ADP. It carries out the reaction a ribonucleoside 5'-diphosphate + ATP = a ribonucleoside 5'-triphosphate + ADP. Functionally, major role in the synthesis of nucleoside triphosphates other than ATP. The ATP gamma phosphate is transferred to the NDP beta phosphate via a ping-pong mechanism, using a phosphorylated active-site intermediate. The polypeptide is Nucleoside diphosphate kinase (Hahella chejuensis (strain KCTC 2396)).